A 758-amino-acid polypeptide reads, in one-letter code: POU domain, class 2, transcription factor 1 (758 aa).

Polar residues-rich tracts occupy residues 1–10, 19–30, and 275–285; these read MKLHSSSKIQ, RMNNPSETSKSP, and VQQLPQSQTTP. 5 disordered regions span residues 1–43, 271–296, 377–398, 450–472, and 534–573; these read MKLH…QTNG, AATPVQQLPQSQTTPKRIDTPSLEEP, TNQSVLNSPGHGMEGLNRRRKK, EKRINPPSSGGSSSSPIKSLFSS, and SVLTSPSLSSSPSATAASSEASTAGETSTTQTTSTPMTSS. The 75-residue stretch at 294–368 folds into the POU-specific domain; that stretch reads EEPSDLEELE…LLEKWLNDAE (75 aa). Positions 395–454 form a DNA-binding region, homeobox; that stretch reads RRKKRTSIETNIRVALEKSFLENQKPTSEEITMIADQLNMEKEVIRVWFCNRRQKEKRIN. A compositionally biased stretch (low complexity) spans 455–472; the sequence is PPSSGGSSSSPIKSLFSS.

Belongs to the POU transcription factor family. Class-2 subfamily. As to expression, expressed in oocytes (at protein level). Expressed in the tadpole brain (at protein level).

The protein resides in the cytoplasm. The protein localises to the nucleus. Functionally, transcription factor that binds to the octamer motif (5'-ATTTGCAT-3') and activates the promoters of the genes of some small nuclear RNAs (snRNA) and histone H2B. In vitro does not bind to variant octamer sequences, such as the H2B octamer 5'-GTTTGCAT-3', although binding has been observed in vivo during early embryogenesis, suggesting that interactions between pou2f1 and other factors might be required for octamer-dependent H2B transcription. Acts downstream of Notch signaling during radial glia formation. May be important for gastrulation, possibly through the regulation of an FGF-type signaling pathway. The protein is POU domain, class 2, transcription factor 1 (pou2f1) of Xenopus laevis (African clawed frog).